We begin with the raw amino-acid sequence, 523 residues long: Leghemoglobin reductase (523 aa).

The transit peptide at 1-30 (MAMASLARRKAYAVVSSSRSSVFLTSLRGF) directs the protein to the mitochondrion. FAD contacts are provided by residues 66 to 75 (EKRGTLGGTC), K84, G148, and 177 to 179 (TGS). The cysteines at positions 75 and 80 are disulfide-linked. NAD(+) is bound by residues 214 to 221 (GAGYIGLE), E237, V271, and G306. Residues D347 and 353 to 356 (MLAH) contribute to the FAD site. H479 serves as the catalytic Proton acceptor.

This sequence belongs to the class-I pyridine nucleotide-disulfide oxidoreductase family. Homodimer. Requires FAD as cofactor.

It localises to the mitochondrion. It catalyses the reaction 2 Fe(III)-[leghemoglobin] + NADH = 2 Fe(II)-[leghemoglobin] + NAD(+) + H(+). The enzyme catalyses 2 Fe(III)-[leghemoglobin] + NADPH = 2 Fe(II)-[leghemoglobin] + NADP(+) + H(+). In terms of biological role, reduces ferric leghemoglobin (Lb) to ferrous Lb. The protein is Leghemoglobin reductase (FLBR) of Vigna unguiculata (Cowpea).